A 133-amino-acid polypeptide reads, in one-letter code: UPF0768 protein C977.18 (133 aa).

Belongs to the UPF0768 family.

The chain is UPF0768 protein C977.18 from Schizosaccharomyces pombe (strain 972 / ATCC 24843) (Fission yeast).